Consider the following 138-residue polypeptide: Large ribosomal subunit protein uL16 (138 aa).

It belongs to the universal ribosomal protein uL16 family. In terms of assembly, part of the 50S ribosomal subunit.

In terms of biological role, binds 23S rRNA and is also seen to make contacts with the A and possibly P site tRNAs. This is Large ribosomal subunit protein uL16 from Chlamydia trachomatis serovar D (strain ATCC VR-885 / DSM 19411 / UW-3/Cx).